A 194-amino-acid polypeptide reads, in one-letter code: MYQDLIRNELNKALQTLQNFLSDERHIQSIEDAAKLIADTFKAGGKVLSCGNGGSHCDAMHFAEELTGRYRENRPGYPAIAISDPSHLSCVSNDFGYEQVFSRYVEAVGNKGDVLVGISTSGNSANIIRAIDAARAKGMRVIVLTGKEGGKMAGSADVEIRVPHFGYADRIQEIHIKAIHILILLIEKEMVAQG.

The SIS domain maps to 37–194 (IADTFKAGGK…LIEKEMVAQG (158 aa)). 52-54 (NGG) is a substrate binding site. His61 and Glu65 together coordinate Zn(2+). Substrate-binding positions include Glu65, 93–94 (ND), 119–121 (STS), Ser124, and Gln172. 2 residues coordinate Zn(2+): Gln172 and His180.

This sequence belongs to the SIS family. GmhA subfamily. Homotetramer. Requires Zn(2+) as cofactor.

It is found in the cytoplasm. The enzyme catalyses 2 D-sedoheptulose 7-phosphate = D-glycero-alpha-D-manno-heptose 7-phosphate + D-glycero-beta-D-manno-heptose 7-phosphate. Its pathway is carbohydrate biosynthesis; D-glycero-D-manno-heptose 7-phosphate biosynthesis; D-glycero-alpha-D-manno-heptose 7-phosphate and D-glycero-beta-D-manno-heptose 7-phosphate from sedoheptulose 7-phosphate: step 1/1. In terms of biological role, catalyzes the isomerization of sedoheptulose 7-phosphate in D-glycero-D-manno-heptose 7-phosphate. This is Phosphoheptose isomerase from Sodalis glossinidius (strain morsitans).